Reading from the N-terminus, the 437-residue chain is GTPase Obg (437 aa).

Residues 2 to 160 (SMFLDTAKIS…RQLELELKIL (159 aa)) enclose the Obg domain. In terms of domain architecture, OBG-type G spans 161-338 (ADVGLVGFPS…LLEATAELLA (178 aa)). GTP-binding positions include 167–174 (GFPSVGKS), 192–196 (FTTIV), 214–217 (DLPG), 284–287 (NKMD), and 319–321 (SSL). Residues S174 and T194 each contribute to the Mg(2+) site. The 79-residue stretch at 359 to 437 (GFAETEKDFE…IGKFEFEFVD (79 aa)) folds into the OCT domain.

Belongs to the TRAFAC class OBG-HflX-like GTPase superfamily. OBG GTPase family. As to quaternary structure, monomer. Mg(2+) serves as cofactor.

It is found in the cytoplasm. Functionally, an essential GTPase which binds GTP, GDP and possibly (p)ppGpp with moderate affinity, with high nucleotide exchange rates and a fairly low GTP hydrolysis rate. Plays a role in control of the cell cycle, stress response, ribosome biogenesis and in those bacteria that undergo differentiation, in morphogenesis control. The protein is GTPase Obg of Streptococcus pyogenes serotype M1.